Here is a 376-residue protein sequence, read N- to C-terminus: N6-methyladenosine RNA methyltransferase MTA1 (376 aa).

Residues 53-78 (TRRLISSPPPETPFVTPEPKNGPSPL) are disordered.

It belongs to the MT-A70-like family.

It catalyses the reaction an adenosine in mRNA + S-adenosyl-L-methionine = an N(6)-methyladenosine in mRNA + S-adenosyl-L-homocysteine + H(+). Its function is as follows. N6-methyladenosine RNA methyltransferase that plays a crucial role in fungal phenotypic traits, virulence, and stress tolerance. Mediates the methylation of mRNAs to produce N6-methyladenosine (m6A)-containing mRNAs. M6A is a modification present at internal sites of mRNAs and some non-coding RNAs and plays a role in mRNA stability and processing. Required for appressorium turgor pressure and regulates autophagosome formation during appressorium formation stage. Specifically, mediates the stability of ATG8 mRNA in a m6A-dependent manner via modification of the m6A site A982 located in 3'UTR region. This is N6-methyladenosine RNA methyltransferase MTA1 from Pyricularia oryzae (strain 70-15 / ATCC MYA-4617 / FGSC 8958) (Rice blast fungus).